Here is a 574-residue protein sequence, read N- to C-terminus: MIKEAIFHKSDVPYAYPLNENQLKIVLRTAVFDVDRVYVLYKDRYDWLGKFKIKPMVLTHTNELFDYYETTLELNKKFVYFFYLVSDGGEKLYYTEAGFYKKRPENHFWGFFHYPYIGEKDVFFAPEWTSDCMVYQIFPERFNNGDKSNDPENVKPWGEKPTADSFFGGDLQGIIDKIDYLKDLGINAIYLTPIFLSHSTHKYDTTDYYTIDPHFGDTQKARELVQKCHDNGIKVIFDAVFNHCGYDFFAFQDVIKNGKKSKYWDWFNIYEWPIKTHPKPSYEAFADTVWRMPKLMTKNPEVQKYLLEVAEYWIKEVDIDGWRLDVANEIDHHFWRKFREVVKAAKPEAIIVGEVWHDASPWLRGDQFDSVMNYPFRNAVVDFFAKRKISASRFNTMITEQLMRHMDSVNRVMFNLIGSHDTERFLTLANGMVARMKLALVFQFTFVGIPYIYYGDEVGMVGDYDPDCRRCMIWEEEKQNKSIFNFYKKLISIRRENEELKYGSFCTLYAIGRVFAFKREYKGKSIIVVLNNSSKQEVIFLNEVEGKEDILKMKELKRSGNLLYLQPNSAYILK.

Ca(2+) contacts are provided by Asn144, Asp146, Asn149, Asp150, Gly168, and Asp170. Substrate is bound by residues His243 and Arg323. Asp325 acts as the Nucleophile in catalysis. Glu354 acts as the Proton donor in catalysis. Substrate is bound by residues His420–Asp421, Asp465, and Arg469.

The protein belongs to the glycosyl hydrolase 13 family. In terms of assembly, monomer. It depends on Ca(2+) as a cofactor.

It catalyses the reaction cyclomaltodextrin + H2O = linear maltodextrin. Its function is as follows. Hydrolyzes cyclodextrins. Can also act on linear maltodextrins, with the exception of maltose. The polypeptide is Cyclomaltodextrinase (Thermoanaerobacter pseudethanolicus (strain ATCC 33223 / 39E) (Clostridium thermohydrosulfuricum)).